Here is a 201-residue protein sequence, read N- to C-terminus: Ras-related protein Rab-9A (201 aa).

The residue at position 2 (A2) is an N-acetylalanine. Residues G17, V18, G19, K20, S21, S22, D33, S34, H38, and T39 each coordinate GTP. S21 is a binding site for Mg(2+). A Switch 1 motif is present at residues 31-42 (KFDSQLFHTIGV). S34 bears the Phosphoserine mark. Residues T39 and D62 each contribute to the Mg(2+) site. The Switch 2 signature appears at 64–78 (AGQERFRSLRTPFYR). Positions 65, 124, 125, 127, 155, and 156 each coordinate GTP. S179 carries the post-translational modification Phosphoserine. A Phosphothreonine modification is found at T187. S-geranylgeranyl cysteine attachment occurs at residues C200 and C201.

The protein belongs to the small GTPase superfamily. Rab family. Interacts (preferentially in its GTP-bound form) with GCC2 (via its GRIP domain). Interacts (GTP-bound form) with SGSM1; the GDP-bound form has much lower affinity for SGSM1. Interacts with SGSM2. The GTP-bound form but not the GDP-bound form interacts with HPS4. The GTP-bound form but not the GDP-bound form interacts with BLOC-3 complex (heterodimer of HPS1 and HPS4) but does not interact with HPS1 alone. Interacts (GTP-bound form) with NDE1; two RAB9A-GTP molecules lie on the opposite sides of the NDE1 homodimer; the interaction leads to RAB9A-dynein motor tethering. Interacts (GTP-bound form) with NDEL1. Requires Mg(2+) as cofactor.

Its subcellular location is the cell membrane. It localises to the endoplasmic reticulum membrane. The protein resides in the golgi apparatus membrane. It is found in the late endosome. The protein localises to the cytoplasmic vesicle. Its subcellular location is the phagosome membrane. It localises to the phagosome. The protein resides in the cytoplasmic vesicle membrane. It is found in the melanosome. It catalyses the reaction GTP + H2O = GDP + phosphate + H(+). With respect to regulation, regulated by guanine nucleotide exchange factors (GEFs) which promote the exchange of bound GDP for free GTP. Regulated by GTPase activating proteins (GAPs) which increase the GTP hydrolysis activity. Inhibited by GDP dissociation inhibitors (GDIs). In terms of biological role, the small GTPases Rab are key regulators of intracellular membrane trafficking, from the formation of transport vesicles to their fusion with membranes. Rabs cycle between an inactive GDP-bound form and an active GTP-bound form that is able to recruit to membranes different sets of downstream effectors directly responsible for vesicle formation, movement, tethering and fusion. RAB9A is involved in the transport of proteins between the endosomes and the trans-Golgi network (TGN). Specifically uses NDE1/NDEL1 as an effector to interact with the dynein motor complex in order to control retrograde trafficking of RAB9-associated late endosomes to the TGN. Involved in the recruitment of SGSM2 to melanosomes and is required for the proper trafficking of melanogenic enzymes TYR, TYRP1 and DCT/TYRP2 to melanosomes in melanocytes. The polypeptide is Ras-related protein Rab-9A (Mus musculus (Mouse)).